Reading from the N-terminus, the 752-residue chain is Kaurene synthase like 2, chloroplastic (752 aa).

The transit peptide at M1–D28 directs the protein to the chloroplast. Mg(2+) contacts are provided by D538, D542, N682, and E690. The short motif at D538–D542 is the DDXXD motif element.

This sequence belongs to the terpene synthase family. Requires Mg(2+) as cofactor. In terms of tissue distribution, highly expressed in leaves.

It localises to the plastid. The protein localises to the chloroplast. Its pathway is secondary metabolite biosynthesis; terpenoid biosynthesis. Its function is as follows. Involved in the biosynthesis of ent-kaurene diterpenoids natural products such as oridonin, miltiradiene, eriocalyxin B and nezukol, known to exhibit antitumor, anti-inflammatory and antibacterial activities. Catalyzes the conversion of ent-copalyl diphosphate (ent-CPP) to ent-isopimaradiene like compounds. The protein is Kaurene synthase like 2, chloroplastic of Isodon rubescens (Rabdosia rubescens).